Reading from the N-terminus, the 160-residue chain is Cytochrome b6-f complex subunit 4 (160 aa).

3 helical membrane-spanning segments follow: residues 36–56 (LLYIFPVVILGTIACNVGLAV), 95–115 (LLGVLLMVSVPAGLLTVPFLE), and 131–151 (TVFLIGTVVALWLGIGATLPI).

The protein belongs to the cytochrome b family. PetD subfamily. As to quaternary structure, the 4 large subunits of the cytochrome b6-f complex are cytochrome b6, subunit IV (17 kDa polypeptide, petD), cytochrome f and the Rieske protein, while the 4 small subunits are petG, petL, petM and petN. The complex functions as a dimer.

The protein resides in the plastid. Its subcellular location is the chloroplast thylakoid membrane. Its function is as follows. Component of the cytochrome b6-f complex, which mediates electron transfer between photosystem II (PSII) and photosystem I (PSI), cyclic electron flow around PSI, and state transitions. This is Cytochrome b6-f complex subunit 4 from Pisum sativum (Garden pea).